Consider the following 285-residue polypeptide: Putative cuticle collagen 75 (285 aa).

2 triple-helical region regions span residues 87 to 116 and 133 to 261; these read GRIGITGPDGQPGKDGLPGMPGSPGIPGEL and GPKG…PGLD. Low complexity predominate over residues 207–231; sequence PGAPGIPGEEGLSGPTGQPGSPGSI. Residues 207–257 form a disordered region; that stretch reads PGAPGIPGEEGLSGPTGQPGSPGSIGAMGYEGAYGDRGEPGPPGPIGRRGG.

Belongs to the cuticular collagen family. Collagen polypeptide chains are complexed within the cuticle by disulfide bonds and other types of covalent cross-links.

In terms of biological role, nematode cuticles are composed largely of collagen-like proteins. The cuticle functions both as an exoskeleton and as a barrier to protect the worm from its environment. This Caenorhabditis elegans protein is Putative cuticle collagen 75 (col-75).